Reading from the N-terminus, the 631-residue chain is Plastidic ATP/ADP-transporter (631 aa).

11 helical membrane-spanning segments follow: residues 106–126 (IELVTLKKIIPLGAMFFCILF), 149–169 (IIPFLKTWVNLPMAIGFMLLY), 180–200 (ALFYTVILPFIAFFGAFGFVL), 238–258 (LFYVMAELWGSVVVSVLFWGF), 271–290 (FYPLFGLGANVALIFSGRTV), 313–333 (GMMSIVVMMGGAICFFYWWVN), 369–389 (LATLVVAYGISINLVEVTWKS), 407–427 (DFSTATGIATFTMMLLSQWIF), 442–462 (VLLLTGVGFFSLLLFGAPLAP), 465–485 (AKFGMTPLLAAVYVGAMQNIF), and 543–563 (LASSTPYLGGVLLVIVLAWLG). The segment at 586–631 (ERASLKIPVVSQNENGNGPLSSESSLNPAGGDSTNASSEPSSPRSL) is disordered. Over residues 595 to 631 (VSQNENGNGPLSSESSLNPAGGDSTNASSEPSSPRSL) the composition is skewed to polar residues.

Belongs to the ADP/ATP translocase tlc (TC 2.A.12.2) family.

It is found in the plastid. The protein resides in the chloroplast membrane. In Solanum tuberosum (Potato), this protein is Plastidic ATP/ADP-transporter.